A 602-amino-acid polypeptide reads, in one-letter code: Sulfite reductase [NADPH] hemoprotein beta-component (602 aa).

Residues 1–23 are disordered; sequence MDDTKTASPAPARAYETPPAERP. Residues Cys-458, Cys-464, Cys-503, and Cys-507 each coordinate [4Fe-4S] cluster. Residue Cys-507 participates in siroheme binding.

Belongs to the nitrite and sulfite reductase 4Fe-4S domain family. As to quaternary structure, alpha(8)-beta(8). The alpha component is a flavoprotein, the beta component is a hemoprotein. It depends on siroheme as a cofactor. The cofactor is [4Fe-4S] cluster.

The enzyme catalyses hydrogen sulfide + 3 NADP(+) + 3 H2O = sulfite + 3 NADPH + 4 H(+). Its pathway is sulfur metabolism; hydrogen sulfide biosynthesis; hydrogen sulfide from sulfite (NADPH route): step 1/1. Functionally, component of the sulfite reductase complex that catalyzes the 6-electron reduction of sulfite to sulfide. This is one of several activities required for the biosynthesis of L-cysteine from sulfate. This is Sulfite reductase [NADPH] hemoprotein beta-component from Methylobacterium sp. (strain 4-46).